Consider the following 565-residue polypeptide: Nucleolar protein 58 (565 aa).

Residues 293–417 (IAPNLTALVG…LESRLRALEH (125 aa)) form the Nop domain. A disordered region spans residues 430–565 (ANGQQGRQQP…KKKKKKKKDE (136 aa)). Over residues 471-481 (EEVKEEKDEKK) the composition is skewed to basic and acidic residues. The span at 519–530 (RKEAKKAAKAAK) shows a compositional bias: basic residues. Residues 531–541 (KAAEESGDGDK) are compositionally biased toward basic and acidic residues.

It belongs to the NOP5/NOP56 family.

The protein localises to the nucleus. It is found in the nucleolus. Its function is as follows. Required for pre-18S rRNA processing. May bind microtubules. The polypeptide is Nucleolar protein 58 (NOP58) (Cryptococcus neoformans var. neoformans serotype D (strain B-3501A) (Filobasidiella neoformans)).